Here is a 344-residue protein sequence, read N- to C-terminus: N-acetyl-gamma-glutamyl-phosphate reductase (344 aa).

The active site involves cysteine 147.

Belongs to the NAGSA dehydrogenase family. Type 1 subfamily.

It is found in the cytoplasm. The catalysed reaction is N-acetyl-L-glutamate 5-semialdehyde + phosphate + NADP(+) = N-acetyl-L-glutamyl 5-phosphate + NADPH + H(+). The protein operates within amino-acid biosynthesis; L-arginine biosynthesis; N(2)-acetyl-L-ornithine from L-glutamate: step 3/4. Its function is as follows. Catalyzes the NADPH-dependent reduction of N-acetyl-5-glutamyl phosphate to yield N-acetyl-L-glutamate 5-semialdehyde. This is N-acetyl-gamma-glutamyl-phosphate reductase from Bacillus amyloliquefaciens (Bacillus velezensis).